The primary structure comprises 156 residues: ATP synthase subunit b (156 aa).

Residues 7–26 (LIGQLIAFALFVAFCMKYVW) traverse the membrane as a helical segment.

Belongs to the ATPase B chain family. In terms of assembly, F-type ATPases have 2 components, F(1) - the catalytic core - and F(0) - the membrane proton channel. F(1) has five subunits: alpha(3), beta(3), gamma(1), delta(1), epsilon(1). F(0) has three main subunits: a(1), b(2) and c(10-14). The alpha and beta chains form an alternating ring which encloses part of the gamma chain. F(1) is attached to F(0) by a central stalk formed by the gamma and epsilon chains, while a peripheral stalk is formed by the delta and b chains.

The protein resides in the cell inner membrane. F(1)F(0) ATP synthase produces ATP from ADP in the presence of a proton or sodium gradient. F-type ATPases consist of two structural domains, F(1) containing the extramembraneous catalytic core and F(0) containing the membrane proton channel, linked together by a central stalk and a peripheral stalk. During catalysis, ATP synthesis in the catalytic domain of F(1) is coupled via a rotary mechanism of the central stalk subunits to proton translocation. Functionally, component of the F(0) channel, it forms part of the peripheral stalk, linking F(1) to F(0). This chain is ATP synthase subunit b, found in Haemophilus ducreyi (strain 35000HP / ATCC 700724).